Reading from the N-terminus, the 73-residue chain is Small ribosomal subunit protein bS18 (73 aa).

This sequence belongs to the bacterial ribosomal protein bS18 family. Part of the 30S ribosomal subunit. Forms a tight heterodimer with protein bS6.

Its function is as follows. Binds as a heterodimer with protein bS6 to the central domain of the 16S rRNA, where it helps stabilize the platform of the 30S subunit. In Prochlorococcus marinus (strain MIT 9313), this protein is Small ribosomal subunit protein bS18.